We begin with the raw amino-acid sequence, 308 residues long: Acetylglutamate kinase (308 aa).

Substrate contacts are provided by residues 67 to 68, R89, and N193; that span reads GG.

It belongs to the acetylglutamate kinase family. ArgB subfamily.

It localises to the cytoplasm. It carries out the reaction N-acetyl-L-glutamate + ATP = N-acetyl-L-glutamyl 5-phosphate + ADP. Its pathway is amino-acid biosynthesis; L-arginine biosynthesis; N(2)-acetyl-L-ornithine from L-glutamate: step 2/4. In terms of biological role, catalyzes the ATP-dependent phosphorylation of N-acetyl-L-glutamate. This chain is Acetylglutamate kinase, found in Nitratidesulfovibrio vulgaris (strain DP4) (Desulfovibrio vulgaris).